The primary structure comprises 242 residues: GATA zinc finger domain-containing protein 1 (242 aa).

The segment at 9–33 (CAVCKTQSSSMWKKGNQGEILCNGC) adopts a GATA-type zinc-finger fold. Residues 44–85 (GASASSTIQQNNGGGKQSKQEIHRRSARLRSTKYKAPASEKK) form a disordered region. Over residues 45–54 (ASASSTIQQN) the composition is skewed to low complexity.

It is found in the nucleus. In terms of biological role, component of some chromatin complex recruited to chromatin sites methylated 'Lys-4' of histone H3 (H3K4me), with a preference for trimethylated form (H3K4me3). The polypeptide is GATA zinc finger domain-containing protein 1 (gatad1) (Danio rerio (Zebrafish)).